Here is a 257-residue protein sequence, read N- to C-terminus: Thiazole synthase (257 aa).

Lys96 (schiff-base intermediate with DXP) is an active-site residue. 1-deoxy-D-xylulose 5-phosphate contacts are provided by residues Gly157, 184–185 (AG), and 206–207 (NT).

It belongs to the ThiG family. Homotetramer. Forms heterodimers with either ThiH or ThiS.

It is found in the cytoplasm. The catalysed reaction is [ThiS sulfur-carrier protein]-C-terminal-Gly-aminoethanethioate + 2-iminoacetate + 1-deoxy-D-xylulose 5-phosphate = [ThiS sulfur-carrier protein]-C-terminal Gly-Gly + 2-[(2R,5Z)-2-carboxy-4-methylthiazol-5(2H)-ylidene]ethyl phosphate + 2 H2O + H(+). It participates in cofactor biosynthesis; thiamine diphosphate biosynthesis. Its function is as follows. Catalyzes the rearrangement of 1-deoxy-D-xylulose 5-phosphate (DXP) to produce the thiazole phosphate moiety of thiamine. Sulfur is provided by the thiocarboxylate moiety of the carrier protein ThiS. In vitro, sulfur can be provided by H(2)S. The sequence is that of Thiazole synthase from Allorhizobium ampelinum (strain ATCC BAA-846 / DSM 112012 / S4) (Agrobacterium vitis (strain S4)).